The sequence spans 256 residues: Phosphonates import ATP-binding protein PhnC (256 aa).

One can recognise an ABC transporter domain in the interval Leu2–Asp246. Gly35–Thr42 serves as a coordination point for ATP.

Belongs to the ABC transporter superfamily. Phosphonates importer (TC 3.A.1.9.1) family. As to quaternary structure, the complex is composed of two ATP-binding proteins (PhnC), two transmembrane proteins (PhnE) and a solute-binding protein (PhnD).

It is found in the cell membrane. The catalysed reaction is phosphonate(out) + ATP + H2O = phosphonate(in) + ADP + phosphate + H(+). In terms of biological role, part of the ABC transporter complex PhnCDE involved in phosphonates import. Responsible for energy coupling to the transport system. In Lactiplantibacillus plantarum (strain ATCC BAA-793 / NCIMB 8826 / WCFS1) (Lactobacillus plantarum), this protein is Phosphonates import ATP-binding protein PhnC.